Consider the following 602-residue polypeptide: 4-hydroxy-3-methylbut-2-en-1-yl diphosphate synthase (flavodoxin) (602 aa).

Residues Cys508, Cys511, Cys543, and Glu550 each coordinate [4Fe-4S] cluster.

This sequence belongs to the IspG family. [4Fe-4S] cluster is required as a cofactor.

It carries out the reaction (2E)-4-hydroxy-3-methylbut-2-enyl diphosphate + oxidized [flavodoxin] + H2O + 2 H(+) = 2-C-methyl-D-erythritol 2,4-cyclic diphosphate + reduced [flavodoxin]. The protein operates within isoprenoid biosynthesis; isopentenyl diphosphate biosynthesis via DXP pathway; isopentenyl diphosphate from 1-deoxy-D-xylulose 5-phosphate: step 5/6. Converts 2C-methyl-D-erythritol 2,4-cyclodiphosphate (ME-2,4cPP) into 1-hydroxy-2-methyl-2-(E)-butenyl 4-diphosphate. The protein is 4-hydroxy-3-methylbut-2-en-1-yl diphosphate synthase (flavodoxin) of Chlamydia trachomatis serovar L2b (strain UCH-1/proctitis).